A 230-amino-acid polypeptide reads, in one-letter code: MSSTTLSPTTPSQLCSGKSGISCPSIALLVKPTRTQMTGRGNKGMKITCQATSIPADRVPDMSKRKTLNLLLLGALSLPTAGMLVPYGSFLVPPGSGSSTGGTVAKDAVGNDVVATEWLKTHAPGDRTLTQGLKGDPTYLVVEKDRTLATFAINAVCTHLGCVVPFNQAENKFICPCHGSQYNDQGRVVRGPAPLSLALAHCDVGVEDGKVVFVPWVETDFRTGDAPWWS.

The transit peptide at 1–50 (MSSTTLSPTTPSQLCSGKSGISCPSIALLVKPTRTQMTGRGNKGMKITCQ) directs the protein to the chloroplast. A helical transmembrane segment spans residues 72–92 (LLGALSLPTAGMLVPYGSFLV). A Rieske domain is found at 115-213 (ATEWLKTHAP…VGVEDGKVVF (99 aa)). [2Fe-2S] cluster contacts are provided by C157, H159, C175, and H178. The cysteines at positions 162 and 177 are disulfide-linked.

It belongs to the Rieske iron-sulfur protein family. As to quaternary structure, the 4 large subunits of the cytochrome b6-f complex are cytochrome b6, subunit IV (17 kDa polypeptide, petD), cytochrome f and the Rieske protein, while the 4 small subunits are petG, petL, petM and petN. The complex functions as a dimer. The cofactor is [2Fe-2S] cluster.

It is found in the plastid. The protein localises to the chloroplast thylakoid membrane. It carries out the reaction 2 oxidized [plastocyanin] + a plastoquinol + 2 H(+)(in) = 2 reduced [plastocyanin] + a plastoquinone + 4 H(+)(out). Its function is as follows. Component of the cytochrome b6-f complex, which mediates electron transfer between photosystem II (PSII) and photosystem I (PSI), cyclic electron flow around PSI, and state transitions. This is Cytochrome b6-f complex iron-sulfur subunit, chloroplastic (petC) from Pisum sativum (Garden pea).